Consider the following 339-residue polypeptide: Ferredoxin--NADP reductase (339 aa).

FAD-binding residues include glutamate 35, glutamine 43, tyrosine 48, valine 88, phenylalanine 122, aspartate 287, and serine 327.

The protein belongs to the ferredoxin--NADP reductase type 2 family. In terms of assembly, homodimer. FAD is required as a cofactor.

It catalyses the reaction 2 reduced [2Fe-2S]-[ferredoxin] + NADP(+) + H(+) = 2 oxidized [2Fe-2S]-[ferredoxin] + NADPH. The chain is Ferredoxin--NADP reductase from Leuconostoc citreum (strain KM20).